A 617-amino-acid polypeptide reads, in one-letter code: Alkaline/neutral invertase E, chloroplastic (617 aa).

A chloroplast-targeting transit peptide spans 1 to 45; sequence MAASETVLRVPLGSVSQSCYLASFFVNSTPNLSFKPVSRNRKTVR. Residue S87 is modified to Phosphoserine.

The protein belongs to the glycosyl hydrolase 100 family. As to expression, expressed in roots, leaves and flowers.

It is found in the plastid. The protein localises to the chloroplast. It catalyses the reaction Hydrolysis of terminal non-reducing beta-D-fructofuranoside residues in beta-D-fructofuranosides.. Functionally, chloroplastic invertase that cleaves sucrose into glucose and fructose and is associated with the development of the photosynthetic apparatus and the assimilation of nitrogen in seedlings to control the sucrose to hexose ratio. Participates in the carbon flux between the cytosol and plastids in leaves. This Arabidopsis thaliana (Mouse-ear cress) protein is Alkaline/neutral invertase E, chloroplastic.